Consider the following 804-residue polypeptide: DNA mismatch repair protein MutS (804 aa).

614–621 serves as a coordination point for ATP; sequence GPNMAGKS.

Belongs to the DNA mismatch repair MutS family.

This protein is involved in the repair of mismatches in DNA. It is possible that it carries out the mismatch recognition step. This protein has a weak ATPase activity. The chain is DNA mismatch repair protein MutS from Ehrlichia ruminantium (strain Welgevonden).